The sequence spans 265 residues: Cytochrome b-c1 complex subunit Rieske, mitochondrial (265 aa).

Residues 1-53 (MLRVAGRRLSSSAARSSSTFFTRSSFTVTDDSSPARSPSPSLTSSFLDQIRGF) constitute a mitochondrion transit peptide. Residues 54–102 (SSNSVSPAHQLGLVSDLPATVAAIKNPSSKIVYDDSNHERYPPGDPSKR) lie on the Mitochondrial matrix side of the membrane. The chain crosses the membrane as a helical span at residues 103 to 125 (AFAYFVLTGGRFVYASSVRLLIL). Over 126 to 265 (KFVLSMSASK…FLEENKLLIG (140 aa)) the chain is Mitochondrial intermembrane. The Rieske domain maps to 175-263 (IKLANSVDLG…YSFLEENKLL (89 aa)). [2Fe-2S] cluster contacts are provided by cysteine 208, histidine 210, cysteine 227, and histidine 230. Cysteine 213 and cysteine 229 are joined by a disulfide.

This sequence belongs to the Rieske iron-sulfur protein family. As to quaternary structure, component of the ubiquinol-cytochrome c oxidoreductase (cytochrome b-c1 complex, complex III, CIII), a multisubunit enzyme composed of 3 respiratory subunits cytochrome b, cytochrome c1 and Rieske protein, 2 core protein subunits, and several low-molecular weight protein subunits. The complex exists as an obligatory dimer and forms supercomplexes (SCs) in the inner mitochondrial membrane with cytochrome c oxidase (complex IV, CIV). The cofactor is [2Fe-2S] cluster.

It localises to the mitochondrion inner membrane. It catalyses the reaction a quinol + 2 Fe(III)-[cytochrome c](out) = a quinone + 2 Fe(II)-[cytochrome c](out) + 2 H(+)(out). Functionally, component of the ubiquinol-cytochrome c oxidoreductase, a multisubunit transmembrane complex that is part of the mitochondrial electron transport chain which drives oxidative phosphorylation. The respiratory chain contains 3 multisubunit complexes succinate dehydrogenase (complex II, CII), ubiquinol-cytochrome c oxidoreductase (cytochrome b-c1 complex, complex III, CIII) and cytochrome c oxidase (complex IV, CIV), that cooperate to transfer electrons derived from NADH and succinate to molecular oxygen, creating an electrochemical gradient over the inner membrane that drives transmembrane transport and the ATP synthase. The cytochrome b-c1 complex catalyzes electron transfer from ubiquinol to cytochrome c, linking this redox reaction to translocation of protons across the mitochondrial inner membrane, with protons being carried across the membrane as hydrogens on the quinol. In the process called Q cycle, 2 protons are consumed from the matrix, 4 protons are released into the intermembrane space and 2 electrons are passed to cytochrome c. The Rieske protein is a catalytic core subunit containing a [2Fe-2S] iron-sulfur cluster. It cycles between 2 conformational states during catalysis to transfer electrons from the quinol bound in the Q(0) site in cytochrome b to cytochrome c1. The protein is Cytochrome b-c1 complex subunit Rieske, mitochondrial (FES1) of Solanum tuberosum (Potato).